A 575-amino-acid chain; its full sequence is Phosphoenolpyruvate-protein phosphotransferase (575 aa).

Histidine 189 acts as the Tele-phosphohistidine intermediate in catalysis. 2 residues coordinate phosphoenolpyruvate: arginine 296 and arginine 332. 2 residues coordinate Mg(2+): glutamate 431 and aspartate 455. Residues 454 to 455 (ND) and arginine 465 each bind phosphoenolpyruvate. The Proton donor role is filled by cysteine 502.

It belongs to the PEP-utilizing enzyme family. As to quaternary structure, homodimer. Requires Mg(2+) as cofactor.

It localises to the cytoplasm. The enzyme catalyses L-histidyl-[protein] + phosphoenolpyruvate = N(pros)-phospho-L-histidyl-[protein] + pyruvate. Functionally, general (non sugar-specific) component of the phosphoenolpyruvate-dependent sugar phosphotransferase system (sugar PTS). This major carbohydrate active-transport system catalyzes the phosphorylation of incoming sugar substrates concomitantly with their translocation across the cell membrane. Enzyme I transfers the phosphoryl group from phosphoenolpyruvate (PEP) to the phosphoryl carrier protein (HPr). The chain is Phosphoenolpyruvate-protein phosphotransferase (ptsI) from Salmonella typhimurium (strain LT2 / SGSC1412 / ATCC 700720).